Here is a 267-residue protein sequence, read N- to C-terminus: Digeranylgeranylglyceryl phosphate synthase (267 aa).

The next 7 membrane-spanning stretches (helical) occupy residues 10–30, 33–53, 80–100, 104–121, 139–159, 198–218, and 247–267; these read ANCVMAGAASLTGMLVSGALL, LHTPVLVFSAVLLITGGGNAI, AALIWSVALFIAGCLIAGLIN, LALALLNSFVLIIYAARL, TFLFGGLAASPSSITAFLSIL, VLASLVLIVAMLLSYLVPLGI, and QRWIKMGMGMALVAFLIGYHI.

This sequence belongs to the UbiA prenyltransferase family. DGGGP synthase subfamily. Mg(2+) serves as cofactor.

It is found in the cell membrane. The enzyme catalyses sn-3-O-(geranylgeranyl)glycerol 1-phosphate + (2E,6E,10E)-geranylgeranyl diphosphate = 2,3-bis-O-(geranylgeranyl)-sn-glycerol 1-phosphate + diphosphate. The protein operates within membrane lipid metabolism; glycerophospholipid metabolism. In terms of biological role, prenyltransferase that catalyzes the transfer of the geranylgeranyl moiety of geranylgeranyl diphosphate (GGPP) to the C2 hydroxyl of (S)-3-O-geranylgeranylglyceryl phosphate (GGGP). This reaction is the second ether-bond-formation step in the biosynthesis of archaeal membrane lipids. The sequence is that of Digeranylgeranylglyceryl phosphate synthase from Methanothrix thermoacetophila (strain DSM 6194 / JCM 14653 / NBRC 101360 / PT) (Methanosaeta thermophila).